Consider the following 891-residue polypeptide: uncharacterized protein (891 aa).

The segment covering 48–64 (GHKKPRSESRKKYDAKK) has biased composition (basic and acidic residues). Residues 48–86 (GHKKPRSESRKKYDAKKQHQSSHFATPVKGVESSEPTEK) are disordered. Ser-261, Ser-263, Ser-265, and Ser-268 each carry phosphoserine. The tract at residues 795 to 822 (QRTFSNESPRAVDSGFSRTSTPFSESTS) is disordered. A compositionally biased stretch (polar residues) spans 810 to 822 (FSRTSTPFSESTS).

The protein localises to the nucleus. This is an uncharacterized protein from Schizosaccharomyces pombe (strain 972 / ATCC 24843) (Fission yeast).